A 307-amino-acid chain; its full sequence is Fructose-bisphosphate aldolase (307 aa).

Ser-49 serves as a coordination point for D-glyceraldehyde 3-phosphate. The active-site Proton donor is the Asp-82. Residues His-83, Asp-104, Glu-134, and His-180 each contribute to the Zn(2+) site. Dihydroxyacetone phosphate is bound at residue Gly-181. Zn(2+) is bound at residue His-210. Residues 211-213 (GAS) and 253-256 (NTDT) each bind dihydroxyacetone phosphate.

It belongs to the class II fructose-bisphosphate aldolase family. In terms of assembly, homodimer. The cofactor is Zn(2+).

The catalysed reaction is beta-D-fructose 1,6-bisphosphate = D-glyceraldehyde 3-phosphate + dihydroxyacetone phosphate. Its pathway is carbohydrate degradation; glycolysis; D-glyceraldehyde 3-phosphate and glycerone phosphate from D-glucose: step 4/4. Catalyzes the aldol condensation of dihydroxyacetone phosphate (DHAP or glycerone-phosphate) with glyceraldehyde 3-phosphate (G3P) to form fructose 1,6-bisphosphate (FBP) in gluconeogenesis and the reverse reaction in glycolysis. This is Fructose-bisphosphate aldolase (fba) from Helicobacter pylori (strain J99 / ATCC 700824) (Campylobacter pylori J99).